The following is a 147-amino-acid chain: Ribonuclease P protein component 2 (147 aa).

It belongs to the eukaryotic/archaeal RNase P protein component 2 family. As to quaternary structure, consists of a catalytic RNA component and at least 4-5 protein subunits.

It localises to the cytoplasm. The enzyme catalyses Endonucleolytic cleavage of RNA, removing 5'-extranucleotides from tRNA precursor.. Its function is as follows. Part of ribonuclease P, a protein complex that generates mature tRNA molecules by cleaving their 5'-ends. The chain is Ribonuclease P protein component 2 from Methanocorpusculum labreanum (strain ATCC 43576 / DSM 4855 / Z).